Reading from the N-terminus, the 315-residue chain is Eukaryotic translation initiation factor 2 subunit 1 (315 aa).

One can recognise an S1 motif domain in the interval 17–88 (EDVVMVNVRS…EKGYIDLSKR (72 aa)). Phosphoserine; by HRI is present on S49. Residue S52 is modified to Phosphoserine. An N6-acetyllysine modification is found at K141. S158 bears the Phosphoserine mark. Phosphothreonine occurs at positions 279 and 281. The disordered stretch occupies residues 293–315 (LERENAEVDGDDDAEEMEAKAED). Positions 299–308 (EVDGDDDAEE) are enriched in acidic residues.

Belongs to the eIF-2-alpha family. In terms of assembly, eukaryotic translation initiation factor 2 eIF2 is a heterotrimeric complex composed of an alpha (EIF2S1), a beta (EIF2S2) and a gamma (EIF2S3) chain. eIF2 is member of the 43S pre-initiation complex (43S PIC). eIF2 forms a complex with at least CELF1/CUGBP1, CALR, CALR3, EIF2S1, EIF2S2, HSP90B1 and HSPA5. Interaction with METAP2 protects EIF2S1 from inhibitory phosphorylation. Interacts with ABCF1. Associates with ribosomes. Interacts with DDX3X in an RNA-independent manner. In terms of processing, phosphorylation at Ser-49 and Ser-52 stabilizes the eIF-2/GDP/eIF2B complex and prevents GDP/GTP exchange reaction, thus impairing the recycling of eIF-2 between successive rounds of initiation and leading to global inhibition of translation, while concomitantly initiating the preferential translation of integrated stress response (ISR)-specific mRNAs. Substrate for at least 4 kinases: EIF2AK1/HRI, EIF2AK2/PKR, EIF2AK3/PERK and EIF2AK4/GCN2. Phosphorylation on Ser-52 by the EIF2AK4/GCN2 protein kinase occurs in response to amino acid starvation and UV irradiation. Phosphorylation at Ser-52 by the EIF2AK3/PERK protein kinase occurs in response to the unfolded protein response. Phosphorylation at Ser-52 by EIF2AK1/HRI in response to mitochondrial damage promotes relocalization to the mitochondrial surface.

Its subcellular location is the cytoplasm. It localises to the stress granule. It is found in the cytosol. The protein localises to the mitochondrion. Its activity is regulated as follows. Activity is regulated by phosphorylation at Ser-49 and Ser-52, which stabilizes the eIF2/GDP/eIF2B complex and prevents the eIF2B-mediated exchange of GDP for GTP, thereby preventing the formation of the 43S pre-initiation complex (43S PIC). This results in the global attenuation of 5' cap-dependent protein synthesis and concomitant translation of ISR-specific mRNAs that contain a short upstream open reading frame (uORF) in their 5' UTR, such as ATF4, ATF5, DDIT3/CHOP and PPP1R15A/GADD34. Its function is as follows. Member of the eIF2 complex that functions in the early steps of protein synthesis by forming a ternary complex with GTP and initiator tRNA. This complex binds to a 40S ribosomal subunit, followed by mRNA binding to form a 43S pre-initiation complex. Junction of the 60S ribosomal subunit to form the 80S initiation complex is preceded by hydrolysis of the GTP bound to eIF2 and release of an eIF2-GDP binary complex. In order for eIF2 to recycle and catalyze another round of initiation, the GDP bound to eIF2 must exchange with GTP by way of a reaction catalyzed by eIF2B. EIF2S1/eIF2-alpha is a key component of the integrated stress response (ISR), required for adaptation to various stress: phosphorylation by metabolic-stress sensing protein kinases (EIF2AK1/HRI, EIF2AK2/PKR, EIF2AK3/PERK and EIF2AK4/GCN2) in response to stress converts EIF2S1/eIF2-alpha in a global protein synthesis inhibitor, leading to a attenuation of cap-dependent translation, while concomitantly initiating the preferential translation of ISR-specific mRNAs, such as the transcriptional activators ATF4 and QRICH1, and hence allowing ATF4- and QRICH1-mediated reprogramming. EIF2S1/eIF2-alpha also acts as an activator of mitophagy in response to mitochondrial damage: phosphorylation by EIF2AK1/HRI promotes relocalization to the mitochondrial surface, thereby triggering PRKN-independent mitophagy. This Pongo abelii (Sumatran orangutan) protein is Eukaryotic translation initiation factor 2 subunit 1 (EIF2S1).